Reading from the N-terminus, the 369-residue chain is D-glucosaminate-6-phosphate ammonia lyase (369 aa).

N6-(pyridoxal phosphate)lysine is present on Lys-213.

The protein belongs to the SelA family. Pyridoxal 5'-phosphate is required as a cofactor.

The catalysed reaction is 2-amino-2-deoxy-D-gluconate 6-phosphate = 2-dehydro-3-deoxy-6-phospho-D-gluconate + NH4(+). Its function is as follows. Involved in the catabolism of D-glucosaminate. Catalyzes the conversion of D-glucosaminate 6-phosphate to yield keto-3-deoxygluconate 6-phosphate (KDGP). This chain is D-glucosaminate-6-phosphate ammonia lyase, found in Salmonella typhimurium (strain 14028s / SGSC 2262).